An 85-amino-acid polypeptide reads, in one-letter code: Small ribosomal subunit protein bS20 (85 aa).

It belongs to the bacterial ribosomal protein bS20 family.

Binds directly to 16S ribosomal RNA. The polypeptide is Small ribosomal subunit protein bS20 (Cytophaga hutchinsonii (strain ATCC 33406 / DSM 1761 / CIP 103989 / NBRC 15051 / NCIMB 9469 / D465)).